The primary structure comprises 366 residues: Gelsolin-like protein 2 (366 aa).

3 Gelsolin-like repeats span residues 55-139, 177-252, and 286-327; these read NFKV…DLFL, KHIV…HEFY, and KSTV…AQEK. The tract at residues 100–116 is actin binding; that stretch reads KSTQDEYCVAAYKTVEL. The tract at residues 104–107 is actin-actin interfilament contact point; sequence DEYC.

Belongs to the villin/gelsolin family. As to quaternary structure, interacts with actin monomers and filaments. As to expression, expressed in circular and longitudinal muscle, pseudohearts, pharynx and gizzard. Not expressed in seminal vesicles.

The protein localises to the cytoplasm. It localises to the cytoskeleton. Calcium-regulated protein that binds to the plus (or barbed) ends of actin monomers or filaments, preventing monomer exchange (end-blocking or capping). Can promote the assembly of monomers into filaments (nucleation) as well as sever existing filaments. This chain is Gelsolin-like protein 2, found in Lumbricus terrestris (Common earthworm).